The primary structure comprises 419 residues: UDP-N-acetylglucosamine 1-carboxyvinyltransferase (419 aa).

Phosphoenolpyruvate is bound at residue 22 to 23 (KN). Arg-93 is a binding site for UDP-N-acetyl-alpha-D-glucosamine. Cys-117 acts as the Proton donor in catalysis. Position 117 is a 2-(S-cysteinyl)pyruvic acid O-phosphothioketal (Cys-117). Residues Asp-307 and Ile-329 each coordinate UDP-N-acetyl-alpha-D-glucosamine.

Belongs to the EPSP synthase family. MurA subfamily.

It localises to the cytoplasm. It carries out the reaction phosphoenolpyruvate + UDP-N-acetyl-alpha-D-glucosamine = UDP-N-acetyl-3-O-(1-carboxyvinyl)-alpha-D-glucosamine + phosphate. It participates in cell wall biogenesis; peptidoglycan biosynthesis. Cell wall formation. Adds enolpyruvyl to UDP-N-acetylglucosamine. In Shewanella woodyi (strain ATCC 51908 / MS32), this protein is UDP-N-acetylglucosamine 1-carboxyvinyltransferase.